A 167-amino-acid polypeptide reads, in one-letter code: Plastocyanin major isoform, chloroplastic (167 aa).

The N-terminal 52 residues, 1-52 (MASVTSATVAIPSFTGLKASTIKSSATVRIQTAAVASPKLTVKSSLKNFGVA), are a transit peptide targeting the chloroplast. Residues 53-68 (AVAAAASIALAGNAMA) constitute a thylakoid transit peptide. The Plastocyanin-like domain occupies 69–167 (IEVLLGGGDG…AGMVGKVTVN (99 aa)). Cu cation is bound by residues H105, C152, H155, and M160.

The protein belongs to the plastocyanin family. It depends on Cu(2+) as a cofactor.

The protein resides in the plastid. The protein localises to the chloroplast thylakoid membrane. Functionally, participates in electron transfer between P700 and the cytochrome b6-f complex in photosystem I. Seems to be the major plastocyanin in Arabidopsis. The polypeptide is Plastocyanin major isoform, chloroplastic (DRT112) (Arabidopsis thaliana (Mouse-ear cress)).